The primary structure comprises 190 residues: Putative manganese efflux pump MntP (190 aa).

Helical transmembrane passes span 3–23 (MSATLILAFGMSMDAFAASIG), 41–61 (LIFGVIEAITPLIGWALGFFA), 62–82 (SQYILEWDHWVAFTLLLILGG), 105–127 (LALLVCTAIATSLDAMAIGVGLA), 143–163 (ATMIMVTLGMMIGRYIGPILG), and 168–188 (VMGGLVLIGIGCNILYEHLGY).

This sequence belongs to the MntP (TC 9.B.29) family.

It localises to the cell inner membrane. Functionally, probably functions as a manganese efflux pump. The sequence is that of Putative manganese efflux pump MntP from Pectobacterium carotovorum subsp. carotovorum (strain PC1).